The primary structure comprises 189 residues: Small ribosomal subunit protein uS5 (189 aa).

One can recognise an S5 DRBM domain in the interval 22–85; it reads FVDKLVAINR…EAAKRELIFV (64 aa).

The protein belongs to the universal ribosomal protein uS5 family. In terms of assembly, part of the 30S ribosomal subunit. Contacts proteins S4 and S8.

In terms of biological role, with S4 and S12 plays an important role in translational accuracy. Its function is as follows. Located at the back of the 30S subunit body where it stabilizes the conformation of the head with respect to the body. The chain is Small ribosomal subunit protein uS5 from Rhizobium johnstonii (strain DSM 114642 / LMG 32736 / 3841) (Rhizobium leguminosarum bv. viciae).